Consider the following 211-residue polypeptide: Thymidylate kinase (211 aa).

10–17 (GPDGAGKT) provides a ligand contact to ATP.

The protein belongs to the thymidylate kinase family.

It carries out the reaction dTMP + ATP = dTDP + ADP. In terms of biological role, phosphorylation of dTMP to form dTDP in both de novo and salvage pathways of dTTP synthesis. This Lactococcus lactis subsp. lactis (strain IL1403) (Streptococcus lactis) protein is Thymidylate kinase (tmk).